Here is a 237-residue protein sequence, read N- to C-terminus: AA9 family lytic polysaccharide monooxygenase C (237 aa).

The signal sequence occupies residues 1-15 (MKVLAPLILAGAASA). H16 and H99 together coordinate Cu(2+). 2 cysteine pairs are disulfide-bonded: C54/C185 and C155/C237. N-linked (GlcNAc...) asparagine glycosylation occurs at N112. Positions 171 and 180 each coordinate O2. Y182 is a binding site for Cu(2+).

This sequence belongs to the polysaccharide monooxygenase AA9 family. It depends on Cu(2+) as a cofactor.

The protein localises to the secreted. It carries out the reaction [(1-&gt;4)-beta-D-glucosyl]n+m + reduced acceptor + O2 = 4-dehydro-beta-D-glucosyl-[(1-&gt;4)-beta-D-glucosyl]n-1 + [(1-&gt;4)-beta-D-glucosyl]m + acceptor + H2O.. Its activity is regulated as follows. Is able to utilize various natural phenolic compounds as reducing agents. Most of these reducing agents are present in plants, either free or as lignin building blocks, such as sinapic acid, or as flavonoids such as catechin and dopamine. Phenolic compounds with 1,2-benzenediol and 1,2,3-benzenetriol moieties yield the highest release of oxidized and non-oxidized glucooligosaccharides from cellulose compared to monophenols or sulfur-containing compounds. Its function is as follows. Lytic polysaccharide monooxygenase (LPMO) that depolymerizes crystalline and amorphous polysaccharides via the oxidation of scissile alpha- or beta-(1-4)-glycosidic bonds, yielding C4 oxidation products. Catalysis by LPMOs requires the reduction of the active-site copper from Cu(II) to Cu(I) by a reducing agent and H(2)O(2) or O(2) as a cosubstrate. Shows oxidative cleavage of beta-(1-3, 1-4)-glucan from oat spelt or xyloglucan from tamarind seed, in addition to cellulose. This chain is AA9 family lytic polysaccharide monooxygenase C, found in Thermothelomyces thermophilus (strain ATCC 42464 / BCRC 31852 / DSM 1799) (Sporotrichum thermophile).